The sequence spans 118 residues: Large ribosomal subunit protein uL22 (118 aa).

This sequence belongs to the universal ribosomal protein uL22 family. As to quaternary structure, part of the 50S ribosomal subunit.

In terms of biological role, this protein binds specifically to 23S rRNA; its binding is stimulated by other ribosomal proteins, e.g. L4, L17, and L20. It is important during the early stages of 50S assembly. It makes multiple contacts with different domains of the 23S rRNA in the assembled 50S subunit and ribosome. Functionally, the globular domain of the protein is located near the polypeptide exit tunnel on the outside of the subunit, while an extended beta-hairpin is found that lines the wall of the exit tunnel in the center of the 70S ribosome. The polypeptide is Large ribosomal subunit protein uL22 (Chlorobium limicola (strain DSM 245 / NBRC 103803 / 6330)).